Consider the following 392-residue polypeptide: Tryptophan synthase beta chain (392 aa).

An N6-(pyridoxal phosphate)lysine modification is found at K84.

Belongs to the TrpB family. Tetramer of two alpha and two beta chains. The cofactor is pyridoxal 5'-phosphate.

The enzyme catalyses (1S,2R)-1-C-(indol-3-yl)glycerol 3-phosphate + L-serine = D-glyceraldehyde 3-phosphate + L-tryptophan + H2O. Its pathway is amino-acid biosynthesis; L-tryptophan biosynthesis; L-tryptophan from chorismate: step 5/5. In terms of biological role, the beta subunit is responsible for the synthesis of L-tryptophan from indole and L-serine. In Campylobacter jejuni subsp. doylei (strain ATCC BAA-1458 / RM4099 / 269.97), this protein is Tryptophan synthase beta chain.